A 716-amino-acid polypeptide reads, in one-letter code: Inhibitor of nuclear factor kappa-B kinase subunit epsilon (716 aa).

Residues Trp-9–Ser-315 enclose the Protein kinase domain. Leu-15–Val-23 serves as a coordination point for ATP. Lys-30 participates in a covalent cross-link: Glycyl lysine isopeptide (Lys-Gly) (interchain with G-Cter in ubiquitin). Residue Lys-38 participates in ATP binding. Catalysis depends on Asp-135, which acts as the Proton acceptor. Ser-172 carries the post-translational modification Phosphoserine; by autocatalysis and IKKB. A Glycyl lysine isopeptide (Lys-Gly) (interchain with G-Cter in SUMO1) cross-link involves residue Lys-231. The interval Ser-383–Glu-647 is interaction with DDX3X. Residue Lys-401 forms a Glycyl lysine isopeptide (Lys-Gly) (interchain with G-Cter in ubiquitin) linkage. The leucine-zipper stretch occupies residues Gln-436–Thr-457. Thr-501 bears the Phosphothreonine mark. Position 664 is a phosphoserine (Ser-664).

It belongs to the protein kinase superfamily. Ser/Thr protein kinase family. I-kappa-B kinase subfamily. As to quaternary structure, homodimer. Interacts with MAVS/IPS1. Interacts (via protein kinase domain) with TTLL12 (via N-terminus); the interaction prevents MAVS binding to IKBKE. Interacts with the adapter proteins AZI2/NAP1, TANK and TBKBP1/SINTBAD. Interacts with SIKE1. Interacts with TICAM1/TRIF, IRF3 and RIGI; interactions are disrupted by the interaction between IKBKE and SIKE1. Interacts with TOPORS; induced by DNA damage. Interacts with CYLD. Interacts (when polyubiquitinated) with IKBKB, IKBKG and MYD88. Interacts with IFIH1. Interacts with DDX3X; the interaction may be induced upon virus infection. Interacts with TRIM6 (via SPRY box). Interacts with unanchored K48-linked polyubiquitin chains; this leads to IKBKE activation. Interacts with TBK1. Interacts with FKBP5. In terms of assembly, (Microbial infection) Interacts (via Protein kinase domain) with arenavirus protein N; the interaction inhibits IKBKE kinase function. (Microbial infection) Interacts with Ebola virus protein VP35; the interaction leads to inhibition of cellular antiviral response by blocking necessary interactions between the IKBKE and MAVS/IPS as well as its substrates IRF3 and IRF7. As to quaternary structure, (Microbial infection) Interacts with Severe fever with thrombocytopenia virus (SFTSV) NSs; this interaction this interaction sequesters IKBKE in NSs-induced cytoplasmic inclusion bodies thereby inhibiting the IFN responses. In terms of assembly, (Microbial infection) Interacts with human T-cell leukemia virus 1/HTLV-1 protein HBZ. (Microbial infection) Interacts with Epstein-Barr virus (EBV) protein NEC2/BFRF1; this interaction inhibits IKBKE kinase activity and IRF3 nuclear translocation. Post-translationally, autophosphorylated and phosphorylated by IKBKB/IKKB. Phosphorylation at Ser-172 is enhanced by the interaction with DDX3X. Phosphorylated at Thr-501 upon IFN activation. In terms of processing, sumoylation by TOPORS upon DNA damage is required for protection of cells against DNA damage-induced cell death. Desumoylated by SENP1. 'Lys-63'-linked polyubiquitinated at Lys-30 and Lys-401 by TRAF2:BIRC2 and TRAF2:BIRC3 complexes. Ubiquitination is induced by LPS, TNFA and interleukin-1 and required for full kinase activity and KF-kappa-B pathway activation. Highly expressed in spleen followed by thymus, peripheral blood leukocytes, pancreas, placenta. Weakly expressed in lung, kidney, prostate, ovary and colon.

Its subcellular location is the cytoplasm. The protein resides in the nucleus. The protein localises to the PML body. The catalysed reaction is L-seryl-[I-kappa-B protein] + ATP = O-phospho-L-seryl-[I-kappa-B protein] + ADP + H(+). Its function is as follows. Serine/threonine kinase that plays an essential role in regulating inflammatory responses to viral infection, through the activation of the type I IFN, NF-kappa-B and STAT signaling. Also involved in TNFA and inflammatory cytokines, like Interleukin-1, signaling. Following activation of viral RNA sensors, such as RIG-I-like receptors, associates with DDX3X and phosphorylates interferon regulatory factors (IRFs), IRF3 and IRF7, as well as DDX3X. This activity allows subsequent homodimerization and nuclear translocation of the IRF3 leading to transcriptional activation of pro-inflammatory and antiviral genes including IFNB. In order to establish such an antiviral state, IKBKE forms several different complexes whose composition depends on the type of cell and cellular stimuli. Thus, several scaffolding molecules including IPS1/MAVS, TANK, AZI2/NAP1 or TBKBP1/SINTBAD can be recruited to the IKBKE-containing-complexes. Activated by polyubiquitination in response to TNFA and interleukin-1, regulates the NF-kappa-B signaling pathway through, at least, the phosphorylation of CYLD. Phosphorylates inhibitors of NF-kappa-B thus leading to the dissociation of the inhibitor/NF-kappa-B complex and ultimately the degradation of the inhibitor. In addition, is also required for the induction of a subset of ISGs which displays antiviral activity, may be through the phosphorylation of STAT1 at 'Ser-708'. Phosphorylation of STAT1 at 'Ser-708' also seems to promote the assembly and DNA binding of ISGF3 (STAT1:STAT2:IRF9) complexes compared to GAF (STAT1:STAT1) complexes, in this way regulating the balance between type I and type II IFN responses. Protects cells against DNA damage-induced cell death. Also plays an important role in energy balance regulation by sustaining a state of chronic, low-grade inflammation in obesity, wich leads to a negative impact on insulin sensitivity. Phosphorylates AKT1. This is Inhibitor of nuclear factor kappa-B kinase subunit epsilon (IKBKE) from Homo sapiens (Human).